Reading from the N-terminus, the 87-residue chain is Large ribosomal subunit protein bL27 (87 aa).

The protein belongs to the bacterial ribosomal protein bL27 family.

The chain is Large ribosomal subunit protein bL27 from Wigglesworthia glossinidia brevipalpis.